Reading from the N-terminus, the 443-residue chain is Glutamate-1-semialdehyde 2,1-aminomutase (443 aa).

At Lys-272 the chain carries N6-(pyridoxal phosphate)lysine.

It belongs to the class-III pyridoxal-phosphate-dependent aminotransferase family. HemL subfamily. Homodimer. The cofactor is pyridoxal 5'-phosphate.

Its subcellular location is the cytoplasm. It carries out the reaction (S)-4-amino-5-oxopentanoate = 5-aminolevulinate. Its pathway is porphyrin-containing compound metabolism; protoporphyrin-IX biosynthesis; 5-aminolevulinate from L-glutamyl-tRNA(Glu): step 2/2. It functions in the pathway porphyrin-containing compound metabolism; chlorophyll biosynthesis. The protein is Glutamate-1-semialdehyde 2,1-aminomutase of Chloroflexus aurantiacus (strain ATCC 29366 / DSM 635 / J-10-fl).